Here is a 311-residue protein sequence, read N- to C-terminus: uncharacterized protein (311 aa).

It belongs to the peptidase C1 family.

This is an uncharacterized protein from Acanthamoeba polyphaga mimivirus (APMV).